Here is a 437-residue protein sequence, read N- to C-terminus: Phosphomethylpyrimidine synthase (437 aa).

Substrate-binding positions include Asn-69, Met-98, Tyr-127, His-163, 185–187 (SRG), 226–229 (DACR), and Glu-265. Position 269 (His-269) interacts with Zn(2+). A substrate-binding site is contributed by Tyr-292. Residue His-333 coordinates Zn(2+). [4Fe-4S] cluster contacts are provided by Cys-409, Cys-412, and Cys-416.

This sequence belongs to the ThiC family. The cofactor is [4Fe-4S] cluster.

The enzyme catalyses 5-amino-1-(5-phospho-beta-D-ribosyl)imidazole + S-adenosyl-L-methionine = 4-amino-2-methyl-5-(phosphooxymethyl)pyrimidine + CO + 5'-deoxyadenosine + formate + L-methionine + 3 H(+). Its pathway is cofactor biosynthesis; thiamine diphosphate biosynthesis. Functionally, catalyzes the synthesis of the hydroxymethylpyrimidine phosphate (HMP-P) moiety of thiamine from aminoimidazole ribotide (AIR) in a radical S-adenosyl-L-methionine (SAM)-dependent reaction. The sequence is that of Phosphomethylpyrimidine synthase from Clostridium botulinum (strain Loch Maree / Type A3).